Consider the following 210-residue polypeptide: Ras-related protein Rab-8 (210 aa).

15-22 is a GTP binding site; that stretch reads GDSGVGKT. The Effector region motif lies at 37–45; that stretch reads FISTIGIDF. GTP-binding positions include 63-67 and 121-124; these read DTAGQ and NKCD. Cysteine 207 bears the Cysteine methyl ester mark. Cysteine 207 carries the S-geranylgeranyl cysteine lipid modification. Positions 208 to 210 are cleaved as a propeptide — removed in mature form; it reads SLL.

This sequence belongs to the small GTPase superfamily. Rab family.

It is found in the cell membrane. The sequence is that of Ras-related protein Rab-8 from Diplobatis ommata (Ocellated electric ray).